The primary structure comprises 256 residues: MGIQKPAWLDALYAEKFFVGCPYHETAKKNERNVCCLDCCTSLCPHCVPSHRFHRLLQVRRYVYHDVVRLEDLQKLIDCSNVQAYTINSAKVVFIKKRPQNRQFKGAGNYCTSCDRSLQEPYIHCSLGCKVDFVMKRYRDITPFLKPCHTLTLGPDYIIPQDLLTDDEVAAYETPRSTVVDGDESMSWSSASSDNNNAGAAAAYAATTTHVVRKKRTGFCLCAKSANSYKEVSEDPDDISACINRRKGVPQRSPLC.

A B box-type zinc finger spans residues 21–59; it reads CPYHETAKKNERNVCCLDCCTSLCPHCVPSHRFHRLLQV.

Expressed predominantly in root meristematic zones.

It is found in the nucleus. Functionally, probable transcription factor that plays a central role in mediating RGF1 hormone peptide signaling leading to the production of reactive oxygen species (ROS) in roots to modulate meristem size and root growth, probably via oxidative post-translational modification of the transcription factor PLETHORA (e.g. PLT1 and PLT2). This chain is Protein RGF1 INDUCIBLE TRANSCRIPTION FACTOR 1, found in Arabidopsis thaliana (Mouse-ear cress).